A 347-amino-acid chain; its full sequence is Zinc-type alcohol dehydrogenase-like protein C16A3.02c (347 aa).

The protein belongs to the zinc-containing alcohol dehydrogenase family. Quinone oxidoreductase subfamily.

The protein localises to the golgi apparatus. It localises to the endoplasmic reticulum. The sequence is that of Zinc-type alcohol dehydrogenase-like protein C16A3.02c from Schizosaccharomyces pombe (strain 972 / ATCC 24843) (Fission yeast).